Consider the following 422-residue polypeptide: Probable biofilm formation methyltransferase WspC (422 aa).

The CheR-type methyltransferase domain occupies 1–264 (MNDRFERLLK…LSFVFRRTSE (264 aa)). Residues Thr67, Arg71, Glu108, Asp132, 186-187 (NL), and 205-206 (RN) each bind S-adenosyl-L-methionine. Residues 289-316 (ASIRPSPPPPAKPRQRLSSLVPPASGQP) form a disordered region. A TPR repeat occupies 354 to 387 (ATVFYWLGLLSDVAGQEQEAQDFYRKALYLEPQH).

In terms of assembly, monomer.

In terms of biological role, involved in biofilm formation. The protein is Probable biofilm formation methyltransferase WspC (wspC) of Pseudomonas aeruginosa (strain ATCC 15692 / DSM 22644 / CIP 104116 / JCM 14847 / LMG 12228 / 1C / PRS 101 / PAO1).